The primary structure comprises 1039 residues: 3',5'-cyclic-AMP phosphodiesterase 4 (1039 aa).

Residues Met1–Ile29 form the signal peptide. 3 N-linked (GlcNAc...) asparagine glycosylation sites follow: Asn11, Asn34, and Asn37. The Extracellular portion of the chain corresponds to Asp30–Arg201. Disordered stretches follow at residues Ser40–Asn63 and Ile116–Ile181. Low complexity predominate over residues Asn45–Asn63. 5 N-linked (GlcNAc...) asparagine glycosylation sites follow: Asn119, Asn124, Asn131, Asn167, and Asn178. Residues Gly202 to Ala222 traverse the membrane as a helical segment. The Cytoplasmic portion of the chain corresponds to Glu223–Ser226. Residues Trp227–Leu247 traverse the membrane as a helical segment. Residues Glu248–Pro256 are Extracellular-facing. A helical transmembrane segment spans residues Leu257 to Phe277. Residues Ser278–Lys283 lie on the Cytoplasmic side of the membrane. Residues Tyr284 to Ile304 traverse the membrane as a helical segment. The Extracellular portion of the chain corresponds to Pro305–His310. Residues Ile311–Trp331 form a helical membrane-spanning segment. Residues Phe332–Glu356 are Cytoplasmic-facing. A helical transmembrane segment spans residues Ala357–Ile377. Over Lys378–Val1039 the chain is Extracellular. Residues Val384–Leu414 adopt a coiled-coil conformation. Asn406, Asn430, Asn500, and Asn515 each carry an N-linked (GlcNAc...) asparagine glycan. The region spanning Pro533–Gln973 is the PDEase domain. The active-site Proton donor is the His609. A divalent metal cation is bound by residues His613, His648, and Asp649. Residues Phe738 to Gln835 are disordered. Positions Thr740–Gln835 are enriched in low complexity. N-linked (GlcNAc...) asparagine glycans are attached at residues Asn769, Asn791, Asn795, Asn804, Asn809, Asn823, and Asn826. Asp861 is a binding site for a divalent metal cation. N-linked (GlcNAc...) asparagine glycosylation is found at Asn874, Asn944, Asn1018, and Asn1023. The segment covering Gln978–Gln1019 has biased composition (low complexity). Residues Gln978–Ser1033 are disordered. Over residues Ser1020–Ser1033 the composition is skewed to polar residues.

It belongs to the cyclic nucleotide phosphodiesterase family. A divalent metal cation serves as cofactor.

Its subcellular location is the cell membrane. It carries out the reaction 3',5'-cyclic AMP + H2O = AMP + H(+). Its activity is regulated as follows. Inhibited by 3-isobutyl-1-methylxanthine (IBMX). In terms of biological role, phosphodiesterase specific for extracellular cAMP. Involved in the degradation of extracellular cAMP specifically during multicellular development. The polypeptide is 3',5'-cyclic-AMP phosphodiesterase 4 (Pde4) (Dictyostelium discoideum (Social amoeba)).